The following is an 89-amino-acid chain: Small ribosomal subunit protein uS15 (89 aa).

This sequence belongs to the universal ribosomal protein uS15 family. As to quaternary structure, part of the 30S ribosomal subunit. Forms a bridge to the 50S subunit in the 70S ribosome, contacting the 23S rRNA.

Its function is as follows. One of the primary rRNA binding proteins, it binds directly to 16S rRNA where it helps nucleate assembly of the platform of the 30S subunit by binding and bridging several RNA helices of the 16S rRNA. Forms an intersubunit bridge (bridge B4) with the 23S rRNA of the 50S subunit in the ribosome. This is Small ribosomal subunit protein uS15 from Geobacillus thermodenitrificans (strain NG80-2).